Here is a 282-residue protein sequence, read N- to C-terminus: Gap junction Cx32.7 protein (282 aa).

Residues 2-13 (GEWDLLGRLLDK) are Cytoplasmic-facing. The chain crosses the membrane as a helical span at residues 14-36 (VQSHSTVIGKVWLTVLFVFRILV). Residues 37–76 (LRTGADRVWGDEQSDFVCNTQQPGCENVCYDLAFPISHVR) are Extracellular-facing. Residues 77-99 (FWFLQIIAVATPKLLYLGHVLHV) traverse the membrane as a helical segment. Residues 100 to 148 (IHAEKKMKERMKKQAELDDQTNLFLRKAYKVPKYTKSSGKISIRGRLLR) lie on the Cytoplasmic side of the membrane. A helical membrane pass occupies residues 149–171 (SYVYHLVAKIILEVLFIVGQYFL). Topologically, residues 172 to 203 (YGFTLDTRYVCTRFPCPHKVDCFLSRPTEKSV) are extracellular. Residues 204 to 226 (IIWFMLVAAFVSLFLSLVELFYL) form a helical membrane-spanning segment. At 227-282 (CVKAAKECMARRQDYTVTPVTPPLLARKSFKSHKEVFQNCVNEPASPENNMEEVHI) the chain is on the cytoplasmic side.

Belongs to the connexin family. Alpha-type (group II) subfamily. As to quaternary structure, a connexon is composed of a hexamer of connexins. Expressed equally in incompetent and competent ovaries.

The protein localises to the cell membrane. It is found in the cell junction. The protein resides in the gap junction. In terms of biological role, one gap junction consists of a cluster of closely packed pairs of transmembrane channels, the connexons, through which materials of low MW diffuse from one cell to a neighboring cell. The sequence is that of Gap junction Cx32.7 protein from Micropogonias undulatus (Atlantic croaker).